A 365-amino-acid chain; its full sequence is U-box domain-containing protein 56 (365 aa).

A coiled-coil region spans residues 176 to 281 (YEEQRRRLEI…ELLRALEKGE (106 aa)). A U-box domain is found at 293 to 365 (EPPQCFICPI…AIKDWLQQHP (73 aa)).

The catalysed reaction is S-ubiquitinyl-[E2 ubiquitin-conjugating enzyme]-L-cysteine + [acceptor protein]-L-lysine = [E2 ubiquitin-conjugating enzyme]-L-cysteine + N(6)-ubiquitinyl-[acceptor protein]-L-lysine.. It functions in the pathway protein modification; protein ubiquitination. In terms of biological role, functions as an E3 ubiquitin ligase. The sequence is that of U-box domain-containing protein 56 (PUB56) from Arabidopsis thaliana (Mouse-ear cress).